A 338-amino-acid polypeptide reads, in one-letter code: MKDKLEALLDQALSELAQASTEEGVQELRVKYLGKKGELTSVMKGLGALTPEERPIIGQVVNTVKGKLEEGFELRGGEIREAVKSARLSAERIDVTLPGRRRPLGSKHPITLVTEEIASIFGALGFAVAEGPEIELDFYNFEALNLPKDHPARDMQDTFYFGESVLLRTHTSPVQIRTMLKQPPPVRIIAPGTVYRCDSDATHSPMFHQVEGLMVDKGITFGDLKGILTLFISQLFGSDIGVRLRPSFFPFTEPSAEVDIACVICRGKGCRVCKETGWLEILGAGMVDPEVYRHVGYDSELYTGFAFGMGIERIAMLKYGIADMRLLFENDLRFLKQF.

Glu253 is a binding site for Mg(2+).

This sequence belongs to the class-II aminoacyl-tRNA synthetase family. Phe-tRNA synthetase alpha subunit type 1 subfamily. Tetramer of two alpha and two beta subunits. Mg(2+) serves as cofactor.

Its subcellular location is the cytoplasm. It catalyses the reaction tRNA(Phe) + L-phenylalanine + ATP = L-phenylalanyl-tRNA(Phe) + AMP + diphosphate + H(+). In Geobacter sp. (strain M21), this protein is Phenylalanine--tRNA ligase alpha subunit.